The following is a 689-amino-acid chain: Solute carrier family 22 member 23 (689 aa).

Disordered regions lie at residues 1 to 55 (MAID…PLPA) and 162 to 188 (TASW…GKGN). Residue N24 is glycosylated (N-linked (GlcNAc...) asparagine). The segment covering 165–177 (WGTTSNRSNSSDT) has biased composition (polar residues). The next 2 helical transmembrane spans lie at 229-249 (FSLL…ADWV) and 253-273 (PVLL…ALSV). N274 carries an N-linked (GlcNAc...) asparagine glycan. The next 8 helical transmembrane spans lie at 283–303 (FFEG…RIEL), 310–330 (FIIT…MPGL), 339–359 (VLQA…SIFP), 462–482 (ADYY…CLVV), 489–509 (GGLL…LGLL), 541–561 (IAFS…SVFF), 572–592 (CGGL…APII), and 601–621 (FLHH…ILLL).

The protein belongs to the major facilitator (TC 2.A.1) superfamily. Organic cation transporter (TC 2.A.1.19) family. Expressed in many tissues, including brain, spinal cord, kidney, liver, eye, adipose tissue, lung, epididymis, adrenal gland, pineal gland, skeletal muscle, heart, spleen, thymus, ovary, uterus, testis and epididymis.

The protein resides in the membrane. This is Solute carrier family 22 member 23 (Slc22a23) from Rattus norvegicus (Rat).